A 431-amino-acid chain; its full sequence is Protein PIN-LIKES 6 (431 aa).

Residues 1–29 (MIARILAALADSMEMPVAAGGGSVLGTIK) lie on the Lumenal side of the membrane. The helical transmembrane segment at 30–50 (IAVMPIAKVFTMCFLGLLMAS) threads the bilayer. Topologically, residues 51–66 (KYVNILPPSGRKLLNG) are cytoplasmic. Residues 67–87 (LVFSLLLPCLIFSQLGQAVTL) traverse the membrane as a helical segment. At 88-93 (QKMLQW) the chain is on the lumenal side. A helical transmembrane segment spans residues 94 to 114 (WFIPVNVVLGTISGSIIGFIV). Topologically, residues 115–128 (ASIVRPPYPYFKFT) are cytoplasmic. The helical transmembrane segment at 129–149 (IIQIGVGNIGNVPLVLLAALC) threads the bilayer. Residues 150-169 (RDTSNPFGDSEKCSIDGTAY) are Lumenal-facing. The helical transmembrane segment at 170–190 (ISFGQWVGAIILYTYVYQMFA) threads the bilayer. The Cytoplasmic segment spans residues 191–268 (PPPEGFDAEE…FLYEKLKLKQ (78 aa)). A helical membrane pass occupies residues 269-289 (IVQPAIVASILAMILGAIPFT). Over 290–306 (KKLIFTNGAPLFFFTDS) the chain is Lumenal. A helical membrane pass occupies residues 307–327 (CMILGDAMIPCILLALGGNLI). Topologically, residues 328–340 (NGPGSSKLGFKTT) are cytoplasmic. The helical transmembrane segment at 341–361 (AAIIIGRLVLVPPVGLGIVTV) threads the bilayer. Topologically, residues 362 to 376 (ADKLGFLPADDKMFR) are lumenal. A helical membrane pass occupies residues 377-397 (FVLLLQHTMPTSVLSGAVANL). At 398 to 406 (RGCGRESAA) the chain is on the cytoplasmic side. Residues 407–427 (VLFWVHIFAIFSMAGWMVLYI) traverse the membrane as a helical segment. Residues 428-431 (NILF) lie on the Lumenal side of the membrane.

It belongs to the auxin efflux carrier (TC 2.A.69.2) family. As to expression, expressed in seedlings, rosette and cauline leaves, stems and flowers.

The protein resides in the endoplasmic reticulum membrane. In terms of biological role, involved in cellular auxin homeostasis by regulating auxin metabolism. Regulates intracellular auxin accumulation at the endoplasmic reticulum and thus auxin availability for nuclear auxin signaling. The protein is Protein PIN-LIKES 6 of Arabidopsis thaliana (Mouse-ear cress).